The chain runs to 80 residues: Exodeoxyribonuclease 7 small subunit (80 aa).

Belongs to the XseB family. In terms of assembly, heterooligomer composed of large and small subunits.

The protein resides in the cytoplasm. The catalysed reaction is Exonucleolytic cleavage in either 5'- to 3'- or 3'- to 5'-direction to yield nucleoside 5'-phosphates.. In terms of biological role, bidirectionally degrades single-stranded DNA into large acid-insoluble oligonucleotides, which are then degraded further into small acid-soluble oligonucleotides. The sequence is that of Exodeoxyribonuclease 7 small subunit from Pseudomonas fluorescens (strain Pf0-1).